A 1129-amino-acid chain; its full sequence is Regulator of nonsense transcripts 1 (1129 aa).

Residues 1-415 are sufficient for interaction with RENT2; it reads MSVEAYGPSS…LRSSVGAPVE (415 aa). Phosphoserine occurs at positions 10 and 31. The segment at 39–70 is disordered; the sequence is TLPSQTQTPPGGPGGPGGGGAGGPGGAGAGAA. Residues 52–69 show a composition bias toward gly residues; that stretch reads GGPGGGGAGGPGGAGAGA. A Upf1 CH-rich domain is found at 115-272; that stretch reads TKDLPIHACS…NKLEELWKEN (158 aa). 12 residues coordinate Zn(2+): cysteine 123, cysteine 126, cysteine 137, serine 140, cysteine 145, histidine 155, histidine 159, cysteine 165, cysteine 183, cysteine 186, cysteine 209, and cysteine 213. Residues 123–155 are C3H; that stretch reads CSYCGIHDPACVVYCNTSKKWFCNGRGNTSGSH. A CC/SHH/C region spans residues 137–165; that stretch reads CNTSKKWFCNGRGNTSGSHIVNHLVRAKC. The segment at 183-213 is C4; sequence CYNCGCRNVFLLGFIPAKADSVVVLLCRQPC. ATP contacts are provided by residues glutamine 486 and 506 to 510; that span reads GTGKT. Serine 565 bears the Phosphoserine mark. Glutamine 676, tyrosine 713, and glutamate 844 together coordinate ATP. A Phosphoserine modification is found at serine 956. Disordered stretches follow at residues 1009-1058 and 1073-1096; these read FGQA…VASQ and SQPSQMSQPGLSQPELSQDSYLGD. Omega-N-methylarginine is present on arginine 1019. Over residues 1025–1034 the composition is skewed to basic residues; that stretch reads KTGRGGRQKN. Polar residues predominate over residues 1041–1058; the sequence is PSQTNLPNSQASQDVASQ. A compositionally biased stretch (low complexity) spans 1073-1086; sequence SQPSQMSQPGLSQP. Phosphoserine occurs at positions 1089, 1107, 1110, and 1127. 2 short sequence motifs ([ST]-Q motif) span residues 1089 to 1090 and 1107 to 1108; these read SQ. The tract at residues 1110–1129 is disordered; that stretch reads STYQGERAYQHGGVTGLSQY.

It belongs to the DNA2/NAM7 helicase family. As to quaternary structure, found in a post-splicing messenger ribonucleoprotein (mRNP) complex. Associates with the exon junction complex (EJC). Associates with the SGM1C complex; is phosphorylated by the complex kinase component SGM1. Part of a complex composed of SMG1, DHX34 and UPF1; within the complex DHX34 acts as a scaffolding protein to facilitate SMG1 phosphorylation of UPF1. Interacts with UPF2. Interacts with UPF3A and UPF3B. Interacts with EST1A. Interacts with SLBP. Interacts (when hyperphosphorylated) with PNRC2. Interacts with AGO1 and AGO2. Interacts with GSPT2. Interacts with isoform 1 and isoform 5 of ADAR/ADAR1. Interacts with SMG7. Interacts with ZC3H12A; this interaction occurs in a mRNA translationally active- and termination-dependent manner and is essential for ZC3H12A-mediated degradation of target mRNAs. Interacts with CPSF6. Interacts with MOV10; the interaction is direct and RNA-dependent. Interacts with SHFL; the interaction increases in the presence of RNA. Interacts with UPF2 and DDX4; interactions are mediated by TDRD6. Interacts with DHX34 and PABPC1/PABP1; the interactions are RNA-independent. Interacts with RBM46. (Microbial infection) Interacts with human T-cell leukemia virus 1/HTLV-1 protein Tax; this interaction inhibits the host nonsense-mediated mRNA decay (NMD). In terms of processing, phosphorylated by SMG1; required for formation of mRNA surveillance complexes. As to expression, ubiquitous.

It is found in the cytoplasm. The protein resides in the P-body. Its subcellular location is the nucleus. The protein localises to the perinuclear region. The enzyme catalyses ATP + H2O = ADP + phosphate + H(+). RNA-dependent helicase required for nonsense-mediated decay (NMD) of aberrant mRNAs containing premature stop codons and modulates the expression level of normal mRNAs. Is recruited to mRNAs upon translation termination and undergoes a cycle of phosphorylation and dephosphorylation; its phosphorylation appears to be a key step in NMD. Recruited by release factors to stalled ribosomes together with the SMG1C protein kinase complex to form the transient SURF (SMG1-UPF1-eRF1-eRF3) complex. In EJC-dependent NMD, the SURF complex associates with the exon junction complex (EJC) (located 50-55 or more nucleotides downstream from the termination codon) through UPF2 and allows the formation of an UPF1-UPF2-UPF3 surveillance complex which is believed to activate NMD. Phosphorylated UPF1 is recognized by EST1B/SMG5, SMG6 and SMG7 which are thought to provide a link to the mRNA degradation machinery involving exonucleolytic and endonucleolytic pathways, and to serve as adapters to protein phosphatase 2A (PP2A), thereby triggering UPF1 dephosphorylation and allowing the recycling of NMD factors. UPF1 can also activate NMD without UPF2 or UPF3, and in the absence of the NMD-enhancing downstream EJC indicative for alternative NMD pathways. Plays a role in replication-dependent histone mRNA degradation at the end of phase S; the function is independent of UPF2. For the recognition of premature termination codons (PTC) and initiation of NMD a competitive interaction between UPF1 and PABPC1 with the ribosome-bound release factors is proposed. The ATPase activity of UPF1 is required for disassembly of mRNPs undergoing NMD. Together with UPF2 and dependent on TDRD6, mediates the degradation of mRNA harboring long 3'UTR by inducing the NMD machinery. Also capable of unwinding double-stranded DNA and translocating on single-stranded DNA. In Homo sapiens (Human), this protein is Regulator of nonsense transcripts 1.